The chain runs to 316 residues: Secreted effector protein SifB (316 aa).

This sequence belongs to the Sif family.

Its subcellular location is the secreted. It is found in the host cytoplasm. Functionally, effector proteins function to alter host cell physiology and promote bacterial survival in host tissues. The protein is Secreted effector protein SifB (sifB) of Salmonella typhimurium (strain LT2 / SGSC1412 / ATCC 700720).